Reading from the N-terminus, the 685-residue chain is Multisite-specific tRNA:(cytosine-C(5))-methyltransferase trm4b (685 aa).

S-adenosyl-L-methionine is bound by residues 167–173 (CAAPGSK), D208, D235, and D270. C323 (nucleophile) is an active-site residue.

It belongs to the class I-like SAM-binding methyltransferase superfamily. RsmB/NOP family. TRM4 subfamily.

Its subcellular location is the nucleus. The enzyme catalyses cytidine(49) in tRNA precursor + S-adenosyl-L-methionine = 5-methylcytidine(49) in tRNA precursor + S-adenosyl-L-homocysteine + H(+). It carries out the reaction cytidine(50) in tRNA + S-adenosyl-L-methionine = 5-methylcytidine(50) in tRNA + S-adenosyl-L-homocysteine + H(+). It catalyses the reaction cytidine(60) in tRNA(Asp) + S-adenosyl-L-methionine = 5-methylcytidine(60) in tRNA(Asp) + S-adenosyl-L-homocysteine + H(+). The catalysed reaction is cytidine(61) in tRNA(Asp) + S-adenosyl-L-methionine = 5-methylcytidine(61) in tRNA(Asp) + S-adenosyl-L-homocysteine + H(+). The enzyme catalyses cytidine(62) in tRNA(Asp) + S-adenosyl-L-methionine = 5-methylcytidine(62) in tRNA(Asp) + S-adenosyl-L-homocysteine + H(+). Functionally, tRNA cytosine C(5)-methyltransferase that methylates cytosine to 5-methylcytosine (m5C) in tRNAs at position 49 and 50. Trm4a and trm4b methylate different sets of tRNAs. Also methylates cytosine to m5C at positions (60, 61 and 62) in tRNA(Asp). This Schizosaccharomyces pombe (strain 972 / ATCC 24843) (Fission yeast) protein is Multisite-specific tRNA:(cytosine-C(5))-methyltransferase trm4b.